The primary structure comprises 303 residues: D-alanyl-D-alanine carboxypeptidase (303 aa).

Residues 7 to 23 (LLLLLFLIYLGYDYVNE) form a helical membrane-spanning segment. The disordered stretch occupies residues 37–56 (DQNPKEHLENSGTSENTQEK). Residues 154-156 (YAL) and Ser-161 contribute to the substrate site. Residues His-163 and Asp-170 each contribute to the Zn(2+) site. Catalysis depends on Glu-213, which acts as the Proton donor/acceptor. His-216 lines the Zn(2+) pocket.

This sequence belongs to the peptidase M15B family. The cofactor is Zn(2+).

Its subcellular location is the cell membrane. The DD-carboxypeptidase activity is not inhibited by beta-lactam antibiotics. In terms of biological role, cleaves the C-terminal D-alanine residue of UDP-muramyl-pentapeptide (UDP-MurNAc-L-Ala-D-Glu-mDAP-D-Ala-D-Ala) or diacetyl-L-Lys-D-Ala-D-Ala. However the physiological substrate likely contains L-Lys instead of mDAP at the third position of the pentapeptide. Also releases the C-terminal D-lactate from UDP-MurNAc-L-Ala-D-Glu-mDAP-D-Ala-D-lactate, a depsipeptide produced by the vancomycin resistance protein VanA. Therefore, VanY should contribute in vivo to the hydrolysis of both the D-alanyl-D-alanine- and the depsipeptide-containing peptidoglycan precursors. Is not necessary for vancomycin resistance of E.faecium BM4147 and perhaps not W14-9. Does not display transpeptidase or beta-lactamase activities. The polypeptide is D-alanyl-D-alanine carboxypeptidase (Enterococcus faecium (Streptococcus faecium)).